The following is a 167-amino-acid chain: Small ribosomal subunit protein uS5 (167 aa).

Positions Leu-12 to Val-75 constitute an S5 DRBM domain.

It belongs to the universal ribosomal protein uS5 family. In terms of assembly, part of the 30S ribosomal subunit. Contacts proteins S4 and S8.

Its function is as follows. With S4 and S12 plays an important role in translational accuracy. Located at the back of the 30S subunit body where it stabilizes the conformation of the head with respect to the body. The protein is Small ribosomal subunit protein uS5 of Alcanivorax borkumensis (strain ATCC 700651 / DSM 11573 / NCIMB 13689 / SK2).